Here is a 498-residue protein sequence, read N- to C-terminus: Diacylglycerol O-acyltransferase 1 (498 aa).

The disordered stretch occupies residues 1–66 (MGDRGGAGSS…AHTRDKDGRT (66 aa)). The Cytoplasmic segment spans residues 1–92 (MGDRGGAGSS…SLFSSDSGFS (92 aa)). The involved in homomerization stretch occupies residues 1–100 (MGDRGGAGSS…FSNYRGILNW (100 aa)). Position 20 is a phosphoserine (Ser-20). Residues 93–127 (NYRGILNWCVVMLILSNARLFLENLIKYGILVDPI) traverse the membrane as a helical segment. Residues 128-139 (QVVSLFLKDPYS) lie on the Lumenal side of the membrane. Positions 128–139 (QVVSLFLKDPYS) are extracellular loop 1 (EL1). A helical membrane pass occupies residues 140 to 165 (WPAPCVIIASNIFVVAAFQIEKRLAV). The tract at residues 140–498 (WPAPCVIIAS…VLNYDAPVGV (359 aa)) is MBOAT fold. Over 166–170 (GALTE) the chain is Cytoplasmic. The helical transmembrane segment at 171-193 (QMGLLLHVVNLATIICFPAAVAL) threads the bilayer. The Lumenal portion of the chain corresponds to 194–200 (LVESITP). Residues 201-232 (VGSVFALASYSIMFLKLYSYRDVNLWCRQRRV) traverse the membrane as a helical segment. The Cytoplasmic segment spans residues 233 to 284 (KAKAVSTGKKVSGAAAQQAVSYPDNLTYRDLYYFIFAPTLCYELNFPRSPRI). Residues 235 to 287 (KAVSTGKKVSGAAAQQAVSYPDNLTYRDLYYFIFAPTLCYELNFPRSPRIRKR) form an intracellular loop 1 (IL1) region. The chain crosses the membrane as a helical span at residues 285-319 (RKRFLLRRVLEMLFFTQLQVGLIQQWMVPTIQNSM). Residues 320 to 326 (KPFKDMD) are Lumenal-facing. A helical membrane pass occupies residues 327-364 (YSRIIERLLKLAVPNHLIWLIFFYWFFHSCLNAVAELL). At 365–410 (QFGDREFYRDWWNAESVTYFWQNWNIPVHKWCIRHFYKPMLRHGSS) the chain is on the cytoplasmic side. The segment at 365–410 (QFGDREFYRDWWNAESVTYFWQNWNIPVHKWCIRHFYKPMLRHGSS) is intracellular loop 2 (IL2). Residues 371 to 377 (FYRDWWN) carry the FYXDWWN motif motif. An acyl-CoA is bound by residues 385-393 (WQNWNIPVH), Tyr-401, and Arg-415. The interval 391-405 (PVHKWCIRHFYKPML) is amphipathic helix (AH). Residues 411–431 (KWVARTGVFLTSAFFHEYLVS) form a helical membrane-spanning segment. His-426 is a catalytic residue. Topologically, residues 432-439 (VPLRMFRL) are lumenal. The chain crosses the membrane as a helical span at residues 440–458 (WAFTAMMAQVPLAWIVGRF). At 459–460 (FQ) the chain is on the cytoplasmic side. A helical membrane pass occupies residues 461–492 (GNYGNAAVWVTLIIGQPVAVLMYVHDYYVLNY). Tyr-488 provides a ligand contact to an acyl-CoA. Over 493–498 (DAPVGV) the chain is Lumenal.

The protein belongs to the membrane-bound acyltransferase family. Sterol o-acyltransferase subfamily. In terms of assembly, homodimer or homotetramer; both forms have similar enzymatic activities.

Its subcellular location is the endoplasmic reticulum membrane. It carries out the reaction an acyl-CoA + a 1,2-diacyl-sn-glycerol = a triacyl-sn-glycerol + CoA. The enzyme catalyses all-trans-retinol + an acyl-CoA = an all-trans-retinyl ester + CoA. It catalyses the reaction 1-octadecanoyl-2-(5Z,8Z,11Z,14Z-eicosatetraenoyl)-sn-glycerol + (9Z)-octadecenoyl-CoA = 1-octadecanoyl-2-(5Z,8Z,11Z,14Z)-eicosatetraenoyl-3-(9Z)-octadecenoyl-sn-glycerol + CoA. The catalysed reaction is hexadecane-1,2-diol + 2 hexadecanoyl-CoA = 1,2-O,O-dihexadecanoyl-1,2-hexadecanediol + 2 CoA. It carries out the reaction hexadecane-1,2-diol + hexadecanoyl-CoA = 2-hydroxyhexadecyl hexadecanoate + CoA. The enzyme catalyses 2-(9Z-octadecenoyl)-glycerol + hexadecanoyl-CoA = 1-hexadecanoyl-2-(9Z-octadecenoyl)-sn-glycerol + CoA. It catalyses the reaction 1,2-di-(9Z-octadecenoyl)-sn-glycerol + hexadecanoyl-CoA = 1,2-di-(9Z)-octadecenoyl-3-hexadecanoyl-sn-glycerol + CoA. The catalysed reaction is hexadecan-1-ol + hexadecanoyl-CoA = hexadecanyl hexadecanoate + CoA. It carries out the reaction all-trans-retinol + hexadecanoyl-CoA = all-trans-retinyl hexadecanoate + CoA. The enzyme catalyses 13-cis-retinol + hexadecanoyl-CoA = 13-cis-retinyl hexadecanoate + CoA. It catalyses the reaction 1,2-di-(9Z-octadecenoyl)-sn-glycerol + (9Z)-octadecenoyl-CoA = 1,2,3-tri-(9Z-octadecenoyl)-glycerol + CoA. The catalysed reaction is 1,3-di-(9Z-octadecenoyl)-glycerol + (9Z)-octadecenoyl-CoA = 1,2,3-tri-(9Z-octadecenoyl)-glycerol + CoA. It carries out the reaction 2,3-di-(9Z)-octadecenoyl-sn-glycerol + (9Z)-octadecenoyl-CoA = 1,2,3-tri-(9Z-octadecenoyl)-glycerol + CoA. The enzyme catalyses 1-O-(9Z-octadecenyl)-glycerol + (9Z)-octadecenoyl-CoA = 1-O-(9Z-octadecyl)-3-(9Z-octadecenoyl)-glycerol + CoA. It catalyses the reaction 1-(9Z-octadecenoyl)-glycerol + (9Z)-octadecenoyl-CoA = 1,2-di-(9Z-octadecenoyl)-glycerol + CoA. The catalysed reaction is 2-(9Z-octadecenoyl)-glycerol + (9Z)-octadecenoyl-CoA = 1,2-di-(9Z-octadecenoyl)-sn-glycerol + CoA. It carries out the reaction 1-O-(9Z-octadecyl)-3-(9Z-octadecenoyl)-glycerol + (9Z)-octadecenoyl-CoA = 1-O-(9Z-octadecenyl)-2,3-di-(9Z-octadecenoyl)glycerol + CoA. The enzyme catalyses 1,2-di-(9Z-octadecenoyl)-glycerol + (9Z)-octadecenoate + H(+) = 1,2,3-tri-(9Z-octadecenoyl)-glycerol + H2O. Its pathway is lipid metabolism; glycerolipid metabolism. In terms of biological role, catalyzes the terminal and only committed step in triacylglycerol synthesis by using diacylglycerol and fatty acyl CoA as substrates. Highly expressed in epithelial cells of the small intestine and its activity is essential for the absorption of dietary fats. In liver, plays a role in esterifying exogenous fatty acids to glycerol, and is required to synthesize fat for storage. Also present in female mammary glands, where it produces fat in the milk. May be involved in VLDL (very low density lipoprotein) assembly. In contrast to DGAT2 it is not essential for survival. Functions as the major acyl-CoA retinol acyltransferase (ARAT) in the skin, where it acts to maintain retinoid homeostasis and prevent retinoid toxicity leading to skin and hair disorders. Exhibits additional acyltransferase activities, includin acyl CoA:monoacylglycerol acyltransferase (MGAT), wax monoester and wax diester synthases. Also able to use 1-monoalkylglycerol (1-MAkG) as an acyl acceptor for the synthesis of monoalkyl-monoacylglycerol (MAMAG). This Mus musculus (Mouse) protein is Diacylglycerol O-acyltransferase 1.